Reading from the N-terminus, the 83-residue chain is Cytochrome b559 subunit alpha (83 aa).

Residues 21–35 (VIHSITIPSLFIAGW) traverse the membrane as a helical segment. Histidine 23 is a heme binding site.

It belongs to the PsbE/PsbF family. Heterodimer of an alpha subunit and a beta subunit. PSII is composed of 1 copy each of membrane proteins PsbA, PsbB, PsbC, PsbD, PsbE, PsbF, PsbH, PsbI, PsbJ, PsbK, PsbL, PsbM, PsbT, PsbX, PsbY, PsbZ, Psb30/Ycf12, at least 3 peripheral proteins of the oxygen-evolving complex and a large number of cofactors. It forms dimeric complexes. It depends on heme b as a cofactor.

It is found in the plastid. It localises to the chloroplast thylakoid membrane. In terms of biological role, this b-type cytochrome is tightly associated with the reaction center of photosystem II (PSII). PSII is a light-driven water:plastoquinone oxidoreductase that uses light energy to abstract electrons from H(2)O, generating O(2) and a proton gradient subsequently used for ATP formation. It consists of a core antenna complex that captures photons, and an electron transfer chain that converts photonic excitation into a charge separation. In Citrus sinensis (Sweet orange), this protein is Cytochrome b559 subunit alpha.